The chain runs to 192 residues: Pyridoxine/pyridoxamine 5'-phosphate oxidase (192 aa).

FMN-binding positions include 41 to 46 (RMMLLK), 56 to 57 (FT), arginine 62, lysine 63, and glutamine 85. Lysine 46 contacts substrate. Positions 103, 107, and 111 each coordinate substrate. FMN contacts are provided by residues 120–121 (QS) and tryptophan 165. Residue 171–173 (RLH) coordinates substrate. Arginine 175 lines the FMN pocket.

This sequence belongs to the pyridoxamine 5'-phosphate oxidase family. Homodimer. It depends on FMN as a cofactor.

The enzyme catalyses pyridoxamine 5'-phosphate + O2 + H2O = pyridoxal 5'-phosphate + H2O2 + NH4(+). It carries out the reaction pyridoxine 5'-phosphate + O2 = pyridoxal 5'-phosphate + H2O2. It participates in cofactor metabolism; pyridoxal 5'-phosphate salvage; pyridoxal 5'-phosphate from pyridoxamine 5'-phosphate: step 1/1. Its pathway is cofactor metabolism; pyridoxal 5'-phosphate salvage; pyridoxal 5'-phosphate from pyridoxine 5'-phosphate: step 1/1. In terms of biological role, catalyzes the oxidation of either pyridoxine 5'-phosphate (PNP) or pyridoxamine 5'-phosphate (PMP) into pyridoxal 5'-phosphate (PLP). This is Pyridoxine/pyridoxamine 5'-phosphate oxidase from Zymomonas mobilis subsp. mobilis (strain ATCC 31821 / ZM4 / CP4).